We begin with the raw amino-acid sequence, 266 residues long: Small ribosomal subunit protein uS2 (266 aa).

The interval 229-254 is disordered; sequence RTSDKEADTTTEEVAQEEVTDTKADE. Over residues 237-247 the composition is skewed to acidic residues; that stretch reads TTTEEVAQEEV.

It belongs to the universal ribosomal protein uS2 family.

The sequence is that of Small ribosomal subunit protein uS2 from Flavobacterium psychrophilum (strain ATCC 49511 / DSM 21280 / CIP 103535 / JIP02/86).